The chain runs to 528 residues: Tyrosine--tRNA ligase, cytoplasmic (528 aa).

Tyr-39 is an L-tyrosine binding site. The short motif at Thr-44–Tyr-52 is the 'HIGH' region element. Residues Tyr-166, Gln-170, Asp-173, and Gln-188 each coordinate L-tyrosine. Residues Lys-222–Ser-226 carry the 'KMSKS' region motif. The Nuclear localization signal motif lies at Lys-242–Lys-247. The segment at Lys-335–Asp-364 is disordered. Residues Lys-346 to Ser-358 show a composition bias toward polar residues. The 105-residue stretch at Asp-364 to Tyr-468 folds into the tRNA-binding domain.

This sequence belongs to the class-I aminoacyl-tRNA synthetase family. In terms of assembly, homodimer.

Its subcellular location is the cytoplasm. It is found in the nucleus. It carries out the reaction tRNA(Tyr) + L-tyrosine + ATP = L-tyrosyl-tRNA(Tyr) + AMP + diphosphate + H(+). In terms of biological role, catalyzes the attachment of tyrosine to tRNA(Tyr) in a two-step reaction: tyrosine is first activated by ATP to form Tyr-AMP and then transferred to the acceptor end of tRNA(Tyr). This chain is Tyrosine--tRNA ligase, cytoplasmic (yars1), found in Xenopus tropicalis (Western clawed frog).